The following is a 549-amino-acid chain: Cation/acetate symporter ActP (549 aa).

A run of 13 helical transmembrane segments spans residues tryptophan 33 to alanine 53, leucine 77 to phenylalanine 97, glycine 103 to glutamate 123, isoleucine 148 to glycine 168, isoleucine 183 to alanine 203, tryptophan 206 to valine 226, isoleucine 262 to leucine 282, glycine 303 to valine 323, leucine 355 to leucine 375, valine 404 to glutamate 424, isoleucine 428 to leucine 448, glycine 464 to valine 484, and isoleucine 493 to leucine 513.

Belongs to the sodium:solute symporter (SSF) (TC 2.A.21) family.

It localises to the cell inner membrane. Transports acetate. This Escherichia coli O1:K1 / APEC protein is Cation/acetate symporter ActP.